Consider the following 392-residue polypeptide: Outer membrane protein assembly factor BamB (392 aa).

Residues 1–19 (MQLRKLLLPGLLSVTLLSG) form the signal peptide. The N-palmitoyl cysteine moiety is linked to residue Cys20. Residue Cys20 is the site of S-diacylglycerol cysteine attachment.

The protein belongs to the BamB family. Part of the Bam complex, which is composed of the outer membrane protein BamA, and four lipoproteins BamB, BamC, BamD and BamE.

It localises to the cell outer membrane. Functionally, part of the outer membrane protein assembly complex, which is involved in assembly and insertion of beta-barrel proteins into the outer membrane. This chain is Outer membrane protein assembly factor BamB, found in Shigella dysenteriae serotype 1 (strain Sd197).